Consider the following 718-residue polypeptide: MPTTVSEEIAGYQLTLETGELAKQANGAVKVQYGNTVVLVTATASKEPKDDLNFFPLTVDYEERLYAVGKIPGGFIKREGKPTEKATLTARLTDRPIRPLFPDGFRNPVHIVSTVLSVDQNCPPEIASIIGASAALSISDIPFDGPIASVKVGKVNDEIVVTPDVDEHEESQLDLVVAGTKDAIMMVEAEANELPEDEMLEAIMKAHEEIKKIITMQEQLVEQVGQKKMEVELDLPSDELVSEVEELALEDIEKVLQIKDKLEREDAMDEAKQKVVDHLLEKYNSEENEDEEEELKEKHIKSAFDSILKREMRSRIIHENSRPDGRGQKEIRPVTCDVDLLPNTHGSGLFTRGQTQVLNVCTLGALGDVQILDGLDIEESKRYMHHYNFPPYSVGEAGFMKGPGRREIGHGALAERALKPMIPTEKDFPYTIRLVSEVLESNGSTSMGSVCASSLSLMDAGVPIEKAVSGIAMGLIKEGDQLAILSDIQGIEDFLGDMDFKVAGTEDGITALQMDIKISGTTREILKQALKQGKDGYLHILNIMKQTISEPREELSPLAPRVIKKQIDPDKIRNVIGPGGKMINKIIDETGVKIDIEPDGLIYISSSDAEQAEQAIKAIDELIKEPEVGEVYLGKVVRTEKYGAFVEILPGKEGLVHISELAEDRVGKTEDVAKVGDEILVKIINIDERGRINLSRKQALGEEDGKTNNDDKKSTKKT.

Mg(2+) is bound by residues aspartate 493 and aspartate 499. The region spanning 560 to 619 (PRVIKKQIDPDKIRNVIGPGGKMINKIIDETGVKIDIEPDGLIYISSSDAEQAEQAIKAI) is the KH domain. An S1 motif domain is found at 629–697 (GEVYLGKVVR…ERGRINLSRK (69 aa)). The interval 695-718 (SRKQALGEEDGKTNNDDKKSTKKT) is disordered. Residues 699–718 (ALGEEDGKTNNDDKKSTKKT) are compositionally biased toward basic and acidic residues.

It belongs to the polyribonucleotide nucleotidyltransferase family. Requires Mg(2+) as cofactor.

The protein resides in the cytoplasm. The enzyme catalyses RNA(n+1) + phosphate = RNA(n) + a ribonucleoside 5'-diphosphate. Its function is as follows. Involved in mRNA degradation. Catalyzes the phosphorolysis of single-stranded polyribonucleotides processively in the 3'- to 5'-direction. This chain is Polyribonucleotide nucleotidyltransferase, found in Natranaerobius thermophilus (strain ATCC BAA-1301 / DSM 18059 / JW/NM-WN-LF).